The primary structure comprises 167 residues: Leptin (167 aa).

Residues 1 to 21 (MRCGPLYQFLWLWPYLSYVEA) form the signal peptide. Cys-117 and Cys-167 are oxidised to a cystine.

Belongs to the leptin family.

The protein localises to the secreted. Functionally, key player in the regulation of energy balance and body weight control. Once released into the circulation, has central and peripheral effects by binding LEPR, found in many tissues, which results in the activation of several major signaling pathways. In the hypothalamus, acts as an appetite-regulating factor that induces a decrease in food intake and an increase in energy consumption by inducing anorexinogenic factors and suppressing orexigenic neuropeptides, also regulates bone mass and secretion of hypothalamo-pituitary-adrenal hormones. In the periphery, increases basal metabolism, influences reproductive function, regulates pancreatic beta-cell function and insulin secretion, is pro-angiogenic for endothelial cell and affects innate and adaptive immunity. In the arcuate nucleus of the hypothalamus, activates by depolarization POMC neurons inducing FOS and SOCS3 expression to release anorexigenic peptides and inhibits by hyperpolarization NPY neurons inducing SOCS3 with a consequent reduction on release of orexigenic peptides. In addition to its known satiety inducing effect, has a modulatory role in nutrient absorption. In the intestine, reduces glucose absorption by enterocytes by activating PKC and leading to a sequential activation of p38, PI3K and ERK signaling pathways which exerts an inhibitory effect on glucose absorption. Acts as a growth factor on certain tissues, through the activation of different signaling pathways increases expression of genes involved in cell cycle regulation such as CCND1, via JAK2-STAT3 pathway, or VEGFA, via MAPK1/3 and PI3K-AKT1 pathways. May also play an apoptotic role via JAK2-STAT3 pathway and up-regulation of BIRC5 expression. Pro-angiogenic, has mitogenic activity on vascular endothelial cells and plays a role in matrix remodeling by regulating the expression of matrix metalloproteinases (MMPs) and tissue inhibitors of metalloproteinases (TIMPs). In innate immunity, modulates the activity and function of neutrophils by increasing chemotaxis and the secretion of oxygen radicals. Increases phagocytosis by macrophages and enhances secretion of pro-inflammatory mediators. Increases cytotoxic ability of NK cells. Plays a pro-inflammatory role, in synergy with IL1B, by inducing NOS2 which promotes the production of IL6, IL8 and Prostaglandin E2, through a signaling pathway that involves JAK2, PI3K, MAP2K1/MEK1 and MAPK14/p38. In adaptive immunity, promotes the switch of memory T-cells towards T helper-1 cell immune responses. Increases CD4(+)CD25(-) T-cell proliferation and reduces autophagy during TCR (T-cell receptor) stimulation, through MTOR signaling pathway activation and BCL2 up-regulation. This is Leptin (LEP) from Bubalus bubalis (Domestic water buffalo).